We begin with the raw amino-acid sequence, 97 residues long: Protein YcgL (97 aa).

A YcgL domain is found at 1–85 (MLCVIYRSSK…PPEDLLKQHL (85 aa)).

The polypeptide is Protein YcgL (Escherichia fergusonii (strain ATCC 35469 / DSM 13698 / CCUG 18766 / IAM 14443 / JCM 21226 / LMG 7866 / NBRC 102419 / NCTC 12128 / CDC 0568-73)).